The chain runs to 254 residues: Protein N-terminal and lysine N-methyltransferase EFM7 (254 aa).

Residues W57, 84-86, D106, W138, and S165 contribute to the S-adenosyl-L-methionine site; that span reads GAA.

It belongs to the class I-like SAM-binding methyltransferase superfamily. EFM7 family.

It localises to the cytoplasm. In terms of biological role, S-adenosyl-L-methionine-dependent protein methyltransferase that trimethylates the N-terminal glycine 'Gly-2' of elongation factor 1-alpha, before also catalyzing the mono- and dimethylation of 'Lys-3'. This Debaryomyces hansenii (strain ATCC 36239 / CBS 767 / BCRC 21394 / JCM 1990 / NBRC 0083 / IGC 2968) (Yeast) protein is Protein N-terminal and lysine N-methyltransferase EFM7.